A 293-amino-acid polypeptide reads, in one-letter code: Undecaprenyl-diphosphatase (293 aa).

A run of 6 helical transmembrane segments spans residues Val-74–Phe-94, Trp-107–Ile-127, Met-134–Met-154, Phe-209–Ala-229, Val-243–Val-263, and Phe-271–Leu-291.

It belongs to the UppP family.

The protein localises to the cell membrane. The enzyme catalyses di-trans,octa-cis-undecaprenyl diphosphate + H2O = di-trans,octa-cis-undecaprenyl phosphate + phosphate + H(+). Its function is as follows. Catalyzes the dephosphorylation of undecaprenyl diphosphate (UPP). Confers resistance to bacitracin. The sequence is that of Undecaprenyl-diphosphatase from Corynebacterium glutamicum (strain R).